Here is a 197-residue protein sequence, read N- to C-terminus: Guanylate kinase (197 aa).

Residues 6-191 (SKLIILSGPS…CVAQIEKIIS (186 aa)) enclose the Guanylate kinase-like domain. 13-20 (GPSGVGKG) provides a ligand contact to ATP.

This sequence belongs to the guanylate kinase family.

Its subcellular location is the cytoplasm. The catalysed reaction is GMP + ATP = GDP + ADP. Essential for recycling GMP and indirectly, cGMP. The sequence is that of Guanylate kinase from Mesomycoplasma hyopneumoniae (strain 232) (Mycoplasma hyopneumoniae).